Consider the following 201-residue polypeptide: Probable nicotinate-nucleotide adenylyltransferase (201 aa).

It belongs to the NadD family.

The enzyme catalyses nicotinate beta-D-ribonucleotide + ATP + H(+) = deamido-NAD(+) + diphosphate. It functions in the pathway cofactor biosynthesis; NAD(+) biosynthesis; deamido-NAD(+) from nicotinate D-ribonucleotide: step 1/1. Its function is as follows. Catalyzes the reversible adenylation of nicotinate mononucleotide (NaMN) to nicotinic acid adenine dinucleotide (NaAD). This chain is Probable nicotinate-nucleotide adenylyltransferase, found in Clostridium botulinum (strain Okra / Type B1).